We begin with the raw amino-acid sequence, 897 residues long: Valine--tRNA ligase (897 aa).

The 'HIGH' region signature appears at 46-56; it reads PNVTGSLHMGH. A 'KMSKS' region motif is present at residues 532 to 536; sequence KMSKT. Lys535 lines the ATP pocket. A coiled-coil region spans residues 839–897; that stretch reads LRRSLEKLDKESGVLAARLDNASYLANAPAELVTESRAKLAEQRAQAAILAEQLARLEN.

The protein belongs to the class-I aminoacyl-tRNA synthetase family. ValS type 1 subfamily. As to quaternary structure, monomer.

It is found in the cytoplasm. It carries out the reaction tRNA(Val) + L-valine + ATP = L-valyl-tRNA(Val) + AMP + diphosphate. Its function is as follows. Catalyzes the attachment of valine to tRNA(Val). As ValRS can inadvertently accommodate and process structurally similar amino acids such as threonine, to avoid such errors, it has a 'posttransfer' editing activity that hydrolyzes mischarged Thr-tRNA(Val) in a tRNA-dependent manner. The chain is Valine--tRNA ligase from Gloeobacter violaceus (strain ATCC 29082 / PCC 7421).